Here is a 628-residue protein sequence, read N- to C-terminus: Probable potassium transport system protein Kup (628 aa).

12 helical membrane passes run 15 to 35 (FAAE…SPLY), 49 to 69 (FLGG…ILSV), 106 to 126 (WYLL…GVLT), 141 to 161 (ISPE…LAVF), 174 to 194 (FFGP…VYGI), 210 to 230 (IMLM…CFLA), 254 to 274 (LFVA…ILLV), 295 to 315 (LLFL…TGVF), 343 to 363 (IYVG…VLGF), 369 to 389 (LASA…ILFI), 398 to 418 (WPAP…FAFA), and 425 to 445 (IHDG…VMVS).

Belongs to the HAK/KUP transporter (TC 2.A.72) family.

The protein resides in the cell inner membrane. The enzyme catalyses K(+)(in) + H(+)(in) = K(+)(out) + H(+)(out). Transport of potassium into the cell. Likely operates as a K(+):H(+) symporter. This chain is Probable potassium transport system protein Kup, found in Xanthobacter autotrophicus (strain ATCC BAA-1158 / Py2).